A 100-amino-acid chain; its full sequence is Small ribosomal subunit protein bS18 (100 aa).

The interval 1–23 (MTFIRKPAGQAKPQKYSTDAYGR) is disordered.

This sequence belongs to the bacterial ribosomal protein bS18 family. As to quaternary structure, part of the 30S ribosomal subunit. Forms a tight heterodimer with protein bS6.

Its function is as follows. Binds as a heterodimer with protein bS6 to the central domain of the 16S rRNA, where it helps stabilize the platform of the 30S subunit. This Endomicrobium trichonymphae protein is Small ribosomal subunit protein bS18.